Here is a 379-residue protein sequence, read N- to C-terminus: Citrate synthase (379 aa).

Residues His-225, His-265, and Asp-316 contribute to the active site.

Belongs to the citrate synthase family. In terms of assembly, homodimer.

It carries out the reaction oxaloacetate + acetyl-CoA + H2O = citrate + CoA + H(+). It functions in the pathway carbohydrate metabolism; tricarboxylic acid cycle; isocitrate from oxaloacetate: step 1/2. Functionally, might regulate the synthesis and function of enzymes involved in later enzymatic steps of Krebs cycle. The polypeptide is Citrate synthase (citZ) (Haloferax volcanii (strain ATCC 29605 / DSM 3757 / JCM 8879 / NBRC 14742 / NCIMB 2012 / VKM B-1768 / DS2) (Halobacterium volcanii)).